The sequence spans 643 residues: MQKPLIELKGVSRVFNLGGLAVEVLKGIDLQIYPGEFVAIMGASGSGKSTLMNILGCLDRPSQGEYLFRGESVSLLHRDDLAQLRREEFGFIFQSYHLIHALDARENVEVPAIYAGAGIVEREKRAEELLGSLGLGERLHHRPSQLSGGQQQRVSIARALMNGGRVILADEPTGALDSRSGEEVMQLLMELSRQGHTIILITHDSHVASHANRVIEMKDGQITHRQEPVIRESNQVRSPFGVRHSSILLELFEAMKMAFRSLKMNLFRTVLTLLGIVIGVASVIVMLAIGDGAKNAVLERISAMGTNILVIRPGMPNSRGFSNIATLIPEDMEAIMELDNIIAAMPENKKSVTTRYGNNDQSTSLNATSSHFTKVRNWPLGKGVFFTEEDEKSYAKVVVLGKTVEKALFGEEDALGRFILVDNIMFQIIGVMSNRGASASGEDEDDVILVPYTTGSLHLIGQKFLRNITVAVDDLSRMGETEREIHSLLLARHGGIEDFRIRNMASLIEDVTQTQNTLTILLGSIAAISLLVGGIGVMNIMLVSVTERTKEIGIRIATGARMRHILQQFLIEAVVVSALGGLIGVVIGLGVSALIEGLGTPVYYSLMPIVWAFGCAFVTGLLFGYLPARKAARLDPVVALASE.

The region spanning 6 to 244 (IELKGVSRVF…QVRSPFGVRH (239 aa)) is the ABC transporter domain. Residue 42–49 (GASGSGKS) coordinates ATP. 4 helical membrane-spanning segments follow: residues 270–290 (VLTL…LAIG), 518–538 (LTIL…IGVM), 569–589 (FLIE…VIGL), and 606–626 (LMPI…FGYL).

The protein belongs to the ABC transporter superfamily. Macrolide exporter (TC 3.A.1.122) family. In terms of assembly, homodimer.

It localises to the cell inner membrane. In terms of biological role, non-canonical ABC transporter that contains transmembrane domains (TMD), which form a pore in the inner membrane, and an ATP-binding domain (NBD), which is responsible for energy generation. Confers resistance against macrolides. The chain is Macrolide export ATP-binding/permease protein MacB from Wolinella succinogenes (strain ATCC 29543 / DSM 1740 / CCUG 13145 / JCM 31913 / LMG 7466 / NCTC 11488 / FDC 602W) (Vibrio succinogenes).